The following is a 206-amino-acid chain: Large ribosomal subunit protein bL25 (206 aa).

The protein belongs to the bacterial ribosomal protein bL25 family. CTC subfamily. In terms of assembly, part of the 50S ribosomal subunit; part of the 5S rRNA/L5/L18/L25 subcomplex. Contacts the 5S rRNA. Binds to the 5S rRNA independently of L5 and L18.

Its function is as follows. This is one of the proteins that binds to the 5S RNA in the ribosome where it forms part of the central protuberance. The chain is Large ribosomal subunit protein bL25 from Paraburkholderia phytofirmans (strain DSM 17436 / LMG 22146 / PsJN) (Burkholderia phytofirmans).